The primary structure comprises 643 residues: Phosphatidylinositol-3,5-bisphosphate 3-phosphatase MTMR2 (643 aa).

Polar residues-rich tracts occupy residues 1–12 (MEKSSSCESLGS) and 23–40 (DSLSSASTSHSENSVHTK). The disordered stretch occupies residues 1 to 54 (MEKSSSCESLGSQPAVARPPSVDSLSSASTSHSENSVHTKSASVVSSDSISTSA). 2 positions are modified to phosphoserine: Ser6 and Ser9. Positions 41 to 54 (SASVVSSDSISTSA) are enriched in low complexity. Ser58 is modified (phosphoserine). Residues 68–139 (NKLAEMEEPP…GVISRVEKIG (72 aa)) form the GRAM domain. The region spanning 205–580 (GWKLYDSLSE…RHLELWVGYY (376 aa)) is the Myotubularin phosphatase domain. 3 residues coordinate a 1,2-diacyl-sn-glycero-3-phospho-(1D-myo-inositol-3,5-bisphosphate): Asn330, Asn355, and Ile356. 3 residues coordinate a 1,2-diacyl-sn-glycero-3-phospho-(1D-myo-inositol-3-phosphate): Asn330, Asn355, and Ile356. Cys417 acts as the Phosphocysteine intermediate in catalysis. A 1,2-diacyl-sn-glycero-3-phospho-(1D-myo-inositol-3,5-bisphosphate) is bound by residues Ser418, Asp419, Gly420, Trp421, Asp422, Arg423, Arg459, and Arg463. Residues Ser418, Asp419, Gly420, Trp421, Asp422, and Arg423 each contribute to the a 1,2-diacyl-sn-glycero-3-phospho-(1D-myo-inositol-3-phosphate) site. An a 1,2-diacyl-sn-glycero-3-phospho-(1D-myo-inositol-3-phosphate)-binding site is contributed by Arg463. Residues 593-627 (IHNRYKELLAKRAELQKKVEELQREISNRSTSSSE) are a coiled coil. Residues 614-643 (LQREISNRSTSSSERAGSPAQCVTPVQTVV) form a disordered region.

It belongs to the protein-tyrosine phosphatase family. Non-receptor class myotubularin subfamily. As to quaternary structure, homodimer (via coiled-coil domain). Heterotetramer consisting of one MTMR2 dimer and one SBF2/MTMR13 dimer; specifically in peripheral nerves stabilizes SBF2/MTMR13 at the membranes and increases MTMR2 catalytic activity towards phosphatidylinositol 3,5-bisphosphate and to a lesser extent towards phosphatidylinositol 3-phosphate. Heterodimer with SBF1/MTMR5; acts as an adapter for the phosphatase MTMR2 to regulate MTMR2 catalytic activity and subcellular location. Heterodimer with MTMR12. In terms of processing, phosphorylation at Ser-58 decreases MTMR2 localization to endocytic vesicular structures.

It is found in the cytoplasm. It localises to the early endosome membrane. The protein resides in the perinuclear region. Its subcellular location is the cell projection. The protein localises to the axon. It is found in the endosome membrane. The catalysed reaction is a 1,2-diacyl-sn-glycero-3-phospho-(1D-myo-inositol-3,5-bisphosphate) + H2O = a 1,2-diacyl-sn-glycero-3-phospho-(1D-myo-inositol-5-phosphate) + phosphate. It catalyses the reaction a 1,2-diacyl-sn-glycero-3-phospho-(1D-myo-inositol-3-phosphate) + H2O = a 1,2-diacyl-sn-glycero-3-phospho-(1D-myo-inositol) + phosphate. It carries out the reaction 1,2-dioctanoyl-sn-glycero-3-phospho-(1-D-myo-inositol-3-phosphate) + H2O = 1,2-dioctanoyl-sn-glycero-3-phospho-(1D-myo-inositol) + phosphate. The enzyme catalyses 1,2-dioctanoyl-sn-glycero-3-phospho-(1D-myo-inositol-3,5-bisphosphate) + H2O = 1,2-dioctanoyl-sn-glycero-3-phospho-(1D-myo-inositol-5-phosphate) + phosphate. Functionally, lipid phosphatase that specifically dephosphorylates the D-3 position of phosphatidylinositol 3-phosphate and phosphatidylinositol 3,5-bisphosphate, generating phosphatidylinositol and phosphatidylinositol 5-phosphate. Regulates the level of these phosphoinositides critical for various biological processes including autophagy initiation and autophagosome maturation. This chain is Phosphatidylinositol-3,5-bisphosphate 3-phosphatase MTMR2, found in Bos taurus (Bovine).